The primary structure comprises 372 residues: MAAPVPWACCAVLAAAAAVVYAQRHSPQEAPHVQYERLGSDVTLPCGTANWDAAVTWRVNGTDLAPDLLNGSQLVLHGLELGHSGLYACFHRDSWHLRHQVLLHVGLPPREPVLSCRSNTYPKGFYCSWHLPTPTYIPNTFNVTVLHGSKIMVCEKDPALKNRCHIRYMHLFSTIKYKVSISVSNALGHNATAITFDEFTIVKPDPPENVVARPVPSNPRRLEVTWQTPSTWPDPESFPLKFFLRYRPLILDQWQHVELSDGTAHTITDAYAGKEYIIQVAAKDNEIGTWSDWSVAAHATPWTEEPRHLTTEAQAAETTTSTTSSLAPPPTTKICDPGELGSGGGPSAPFLVSVPITLALAAAAATASSLLI.

The N-terminal stretch at 1 to 22 is a signal peptide; it reads MAAPVPWACCAVLAAAAAVVYA. An Ig-like C2-type domain is found at 27–104; it reads PQEAPHVQYE…WHLRHQVLLH (78 aa). Cys46 and Cys89 are disulfide-bonded. Residues Asn60, Asn70, Asn142, and Asn190 are each glycosylated (N-linked (GlcNAc...) asparagine). Fibronectin type-III domains lie at 108–205 and 206–306; these read PPRE…VKPD and PPEN…TEEP. Positions 290-294 match the WSXWS motif motif; it reads WSDWS. Residues 301–340 form a disordered region; that stretch reads PWTEEPRHLTTEAQAAETTTSTTSSLAPPPTTKICDPGEL. Over residues 311 to 326 the composition is skewed to low complexity; it reads TEAQAAETTTSTTSSL. The GPI-anchor amidated serine moiety is linked to residue Ser342. A propeptide spans 343-372 (removed in mature form); sequence GGGPSAPFLVSVPITLALAAAAATASSLLI.

It belongs to the type I cytokine receptor family. Type 3 subfamily. Forms a heterotrimer with LIFR and IL6ST. Interacts with heterodimeric neurotropic cytokine composed of CLCF1/CLC and CRLF1/CLF-1. Either alone or in complex with the heterodimer CLCF1-CRLF1 interacts with SORL1; this interaction may promote internalization and lysosomal degradation. Component of a receptor complex composed of IL6ST/GP130, IL27RA/WSX1 and CNTFR which interacts with the neuroprotective peptide humanin. As to expression, nervous system and skeletal muscle.

The protein resides in the cell membrane. Binds to CNTF. The alpha subunit provides the receptor specificity. Receptor for heterodimeric neurotropic cytokine composed of CLCF1/CLC and CRLF1/CLF-1. Acts as a receptor for the neuroprotective peptide humanin as part of a complex with IL6ST/GP130 and IL27RA/WSX1. The sequence is that of Ciliary neurotrophic factor receptor subunit alpha (CNTFR) from Homo sapiens (Human).